The sequence spans 959 residues: Isoleucine--tRNA ligase (959 aa).

The 'HIGH' region signature appears at 60–70 (PYANGSLHMGH). L-isoleucyl-5'-AMP is bound at residue Glu-569. Residues 610–614 (KMSKS) carry the 'KMSKS' region motif. Residue Lys-613 coordinates ATP. Zn(2+) contacts are provided by Cys-928, Cys-931, Cys-948, and Cys-951.

The protein belongs to the class-I aminoacyl-tRNA synthetase family. IleS type 1 subfamily. Monomer. The cofactor is Zn(2+).

It is found in the cytoplasm. It catalyses the reaction tRNA(Ile) + L-isoleucine + ATP = L-isoleucyl-tRNA(Ile) + AMP + diphosphate. In terms of biological role, catalyzes the attachment of isoleucine to tRNA(Ile). As IleRS can inadvertently accommodate and process structurally similar amino acids such as valine, to avoid such errors it has two additional distinct tRNA(Ile)-dependent editing activities. One activity is designated as 'pretransfer' editing and involves the hydrolysis of activated Val-AMP. The other activity is designated 'posttransfer' editing and involves deacylation of mischarged Val-tRNA(Ile). The sequence is that of Isoleucine--tRNA ligase from Gloeothece citriformis (strain PCC 7424) (Cyanothece sp. (strain PCC 7424)).